Reading from the N-terminus, the 364-residue chain is Trans-enoyl reductase traG (364 aa).

51–54 is an NADP(+) binding site; it reads VDAK. 136-143 is a binding site for substrate; it reads LGLFTAGL. NADP(+) contacts are provided by residues 176 to 179, 199 to 202, tyrosine 217, and 264 to 265; these read STAT, SKAN, and LE. 286-290 provides a ligand contact to substrate; it reads ALTVF. 355-356 is a binding site for NADP(+); it reads MS.

The protein belongs to the zinc-containing alcohol dehydrogenase family. As to quaternary structure, monomer.

Its pathway is secondary metabolite biosynthesis. Functionally, trans-enoyl reductase; part of the tra gene cluster that produces terrestric acid. The clavatol biosynthesis cluster cla and the terrestric acid cluster tra are both involved in the production of peniphenones and penilactones. The non-reducing PKS claF is responsible for the formation of clavatol from successive condensations of 3 malonyl-CoA units, presumably with a simple acetyl-CoA starter unit, and 2 methylation steps. The esterase claE probably collaborates with claF by catalyzing the hydrolysis of ACP-bound acyl intermediates to free the ACP from stalled intermediates. The clavatol oxidase claD then converts clavatol to hydroxyclavatol. Spontaneous dehydration of hydroxyclavatol leads to the accumulation of the highly active ortho-quinone methide. On the other hand, the PKS-NRPS hybrid traA is involved in the formation of crustosic acid, with the help of traB and traD. The polyketide synthase module (PKS) of traA is responsible for the synthesis of the polyketide backbone via the condensation of an acetyl-CoA starter unit with 3 malonyl-CoA units. The downstream nonribosomal peptide synthetase (NRPS) module then amidates the carboxyl end of the polyketide with L-malic acid. Because traA lacks a designated enoylreductase (ER) domain, the required activity is provided the enoyl reductase traG. Crustosic acid undergoes decarboxylation and isomerization to the terrestric acid, catalyzed by the 2-oxoglutarate-dependent dioxygenase traH. Both acids are further converted to the 2 gamma-butyrolactones (R)-5-methyltetronic acid and (S)-5-carboxylmethyltetronic acid, with involvement of the cytochrome P450 monooxygenase claJ. Spontaneous addition of the methide to these gamma-butyrolactones leads to peniphenone D and penilactone D, which undergo again stereospecific attacking by methide to give penilactones A and B. The protein is Trans-enoyl reductase traG of Penicillium crustosum (Blue mold fungus).